We begin with the raw amino-acid sequence, 729 residues long: RNA1 polyprotein (729 aa).

A Peptidase C3 domain is found at 1–21; the sequence is GIHVAGGRGKGYACLMPPLRP. Residues 299–429 form the RdRp catalytic domain; sequence NSILCCDYSS…SVSPVIHDKF (131 aa).

Post-translationally, specific enzymatic cleavages by picornain 3C-like protease in vivo yield mature proteins. Picornain 3C-like protease is autocatalytically processed.

It localises to the host endoplasmic reticulum. It carries out the reaction RNA(n) + a ribonucleoside 5'-triphosphate = RNA(n+1) + diphosphate. Its function is as follows. Thiol protease that cleaves the RNA1 and RNA2 polyproteins. Replicates the viral genome. This chain is RNA1 polyprotein, found in Solanum tuberosum (Potato).